The chain runs to 310 residues: Putative carboxypeptidase SCO6489 (310 aa).

The Nucleophile role is filled by serine 116. Residues glutamate 212 and histidine 277 each act as charge relay system in the active site.

This sequence belongs to the peptidase S66 family.

This is Putative carboxypeptidase SCO6489 from Streptomyces coelicolor (strain ATCC BAA-471 / A3(2) / M145).